The chain runs to 446 residues: Mitochondrial distribution and morphology protein 12 (446 aa).

Positions Met-1–Val-446 constitute an SMP-LTD domain. The span at Asp-75 to Asp-85 shows a compositional bias: acidic residues. Disordered regions lie at residues Asp-75–Asp-106, Pro-126–Ser-145, and Thr-188–Glu-283. Residues Pro-126 to Leu-138 show a composition bias toward basic and acidic residues. Over residues Thr-233 to Ser-246 the composition is skewed to polar residues. Residues Ser-260–Asn-274 are compositionally biased toward basic and acidic residues.

It belongs to the MDM12 family. As to quaternary structure, component of the ER-mitochondria encounter structure (ERMES) or MDM complex, composed of MMM1, MDM10, MDM12 and MDM34. An MMM1 homodimer associates with one molecule of MDM12 on each side in a pairwise head-to-tail manner, and the SMP-LTD domains of MMM1 and MDM12 generate a continuous hydrophobic tunnel for phospholipid trafficking.

It is found in the mitochondrion outer membrane. It localises to the endoplasmic reticulum membrane. Its function is as follows. Component of the ERMES/MDM complex, which serves as a molecular tether to connect the endoplasmic reticulum (ER) and mitochondria. Components of this complex are involved in the control of mitochondrial shape and protein biogenesis, and function in nonvesicular lipid trafficking between the ER and mitochondria. MDM12 is required for the interaction of the ER-resident membrane protein MMM1 and the outer mitochondrial membrane-resident beta-barrel protein MDM10. The MDM12-MMM1 subcomplex functions in the major beta-barrel assembly pathway that is responsible for biogenesis of all mitochondrial outer membrane beta-barrel proteins, and acts in a late step after the SAM complex. The MDM10-MDM12-MMM1 subcomplex further acts in the TOM40-specific pathway after the action of the MDM12-MMM1 complex. Essential for establishing and maintaining the structure of mitochondria and maintenance of mtDNA nucleoids. The sequence is that of Mitochondrial distribution and morphology protein 12 from Coccidioides immitis (strain RS) (Valley fever fungus).